Reading from the N-terminus, the 266-residue chain is Carboxy-S-adenosyl-L-methionine synthase (266 aa).

A disordered region spans residues 1–24 (MPKRETQSLHDTQQQPGPTAPQRD). Residues Tyr58, 83 to 85 (GCS), 108 to 109 (DN), 136 to 137 (DI), Asn151, and Arg218 contribute to the S-adenosyl-L-methionine site.

Belongs to the class I-like SAM-binding methyltransferase superfamily. Cx-SAM synthase family. Homodimer.

The catalysed reaction is prephenate + S-adenosyl-L-methionine = carboxy-S-adenosyl-L-methionine + 3-phenylpyruvate + H2O. Its function is as follows. Catalyzes the conversion of S-adenosyl-L-methionine (SAM) to carboxy-S-adenosyl-L-methionine (Cx-SAM). The protein is Carboxy-S-adenosyl-L-methionine synthase of Yersinia enterocolitica serotype O:8 / biotype 1B (strain NCTC 13174 / 8081).